Consider the following 396-residue polypeptide: Acetate kinase (396 aa).

Mg(2+) is bound at residue Asn8. Lys15 contributes to the ATP binding site. Arg89 provides a ligand contact to substrate. Asp146 functions as the Proton donor/acceptor in the catalytic mechanism. Residues 206–210, 283–285, and 331–335 contribute to the ATP site; these read HIGNG, DMR, and GVGEN. Residue Glu383 coordinates Mg(2+).

It belongs to the acetokinase family. In terms of assembly, homodimer. It depends on Mg(2+) as a cofactor. Requires Mn(2+) as cofactor.

It localises to the cytoplasm. It carries out the reaction acetate + ATP = acetyl phosphate + ADP. Its pathway is metabolic intermediate biosynthesis; acetyl-CoA biosynthesis; acetyl-CoA from acetate: step 1/2. Functionally, catalyzes the formation of acetyl phosphate from acetate and ATP. Can also catalyze the reverse reaction. The sequence is that of Acetate kinase from Streptococcus pneumoniae (strain 70585).